The sequence spans 51 residues: Large ribosomal subunit protein eL39 (51 aa).

Belongs to the eukaryotic ribosomal protein eL39 family.

The polypeptide is Large ribosomal subunit protein eL39 (RpL39) (Plutella xylostella (Diamondback moth)).